Consider the following 188-residue polypeptide: Protein YecM (188 aa).

This sequence to H.influenzae HI_1582/HI_1581.

The chain is Protein YecM (yecM) from Escherichia coli (strain K12).